Here is a 136-residue protein sequence, read N- to C-terminus: Acidic phospholipase A2 CC-PLA2-2 (136 aa).

An N-terminal signal peptide occupies residues methionine 1 to glycine 16. Intrachain disulfides connect cysteine 42–cysteine 129, cysteine 44–cysteine 60, cysteine 59–cysteine 109, cysteine 65–cysteine 136, cysteine 66–cysteine 102, cysteine 73–cysteine 95, and cysteine 90–cysteine 100. Ca(2+) is bound by residues tyrosine 43, glycine 45, and glycine 47. Residue histidine 63 is part of the active site. A Ca(2+)-binding site is contributed by aspartate 64. Aspartate 103 is an active-site residue.

The protein belongs to the phospholipase A2 family. Group II subfamily. D49 sub-subfamily. Requires Ca(2+) as cofactor. Glycosylated (2.5%). In terms of tissue distribution, expressed by the venom gland.

The protein resides in the secreted. The enzyme catalyses a 1,2-diacyl-sn-glycero-3-phosphocholine + H2O = a 1-acyl-sn-glycero-3-phosphocholine + a fatty acid + H(+). Its function is as follows. Snake venom phospholipase A2 that inhibits blood coagulation and platelet aggregation induced by ADP and arachidonic acid. Inhibits tumor cell adhesion and migration in a dose-dependent manner. Abolishes the attachment of human brain microvascular endothelial cells (HBMEC) to fibrinogen (IC(50)=0.2 uM) and dramatically reduces its adhesion to fibronectin (IC(50)=0.3 uM), whereas no effect is observed on type I collagen, vitronectin or laminin 1. Also blocks the cell migration toward fibronectin and fibrinogen. These effects are not dependent of the catalytic activity, but are mediated by alpha-5/beta-1 (ITGA5/ITGB1) and alpha-v-containing (ITGAV) integrins. Also shows anti-angiogenic activity in chicken chorioallantoix membrane assay. Has a relatively high enzymatic activity. PLA2 catalyzes the calcium-dependent hydrolysis of the 2-acyl groups in 3-sn-phosphoglycerides. This Cerastes cerastes (Horned desert viper) protein is Acidic phospholipase A2 CC-PLA2-2.